A 144-amino-acid chain; its full sequence is Large ribosomal subunit protein uL11 (144 aa).

This sequence belongs to the universal ribosomal protein uL11 family. In terms of assembly, part of the ribosomal stalk of the 50S ribosomal subunit. Interacts with L10 and the large rRNA to form the base of the stalk. L10 forms an elongated spine to which L12 dimers bind in a sequential fashion forming a multimeric L10(L12)X complex. In terms of processing, one or more lysine residues are methylated.

In terms of biological role, forms part of the ribosomal stalk which helps the ribosome interact with GTP-bound translation factors. This Streptomyces sp. (strain FRI-5) protein is Large ribosomal subunit protein uL11.